The following is a 522-amino-acid chain: MKLRVRLQKRTQPLEVPESEPTLGQLRAHLIQDLLPTLGFSSDTRFAITLNNKDALTGDEETLASYGIVSGDLICLVLEDEMPAPNLPSSTDSEHSSLQNNDQPPLAATSSQANIPDEQGSDSSHGQVTQYDAWTDDSMEGPSHSAEAVSIQDAMSVEEASGFHPLEPMLCSETEDGQVPHSLEALYQSAGCSTVSDALIVLVHLLMLESGYIPQGTEAKAASMPEKWKSSGVYKLQYTHPLCEGGSAVLTCVPLGKLIMINATIKVNGGIKNVKSVQLKPGAYVRRAEPGESAAKVYKDLKKLSRLFKDQLVYPLLAFTRQVLNLPDVFGLVVLPLELKLRIFRLLDVHSVLALSAVCHDLLIASNDPLLWRCLYLRDFRDSTIRGPDTDWKELYRKKHIQRKEAQRMRHVMYLPSVHPIPFCPIPVYPRPYLPTTLLPPGIIGGEYDERPILPSVGDPVTSLIPRPGEPPSQFRPVRPRFDPVGPLPGSNSLLPGRASPNNRFPFRPGRGRSADNRLPYL.

Disordered regions lie at residues 1-20 and 85-128; these read MKLR…PESE and PNLP…HGQV. The interval 1–88 is ubiquitin-like; that stretch reads MKLRVRLQKR…EDEMPAPNLP (88 aa). Positions 87–114 are enriched in polar residues; sequence LPSSTDSEHSSLQNNDQPPLAATSSQAN. An important for interaction with PINK1 region spans residues 92–129; that stretch reads DSEHSSLQNNDQPPLAATSSQANIPDEQGSDSSHGQVT. An important for interaction with CDK6 region spans residues 129-169; sequence TQYDAWTDDSMEGPSHSAEAVSIQDAMSVEEASGFHPLEPM. The segment at 180–324 is important for dimerization and interaction with PSMF1; sequence PHSLEALYQS…PLLAFTRQVL (145 aa). Residues 329–375 enclose the F-box domain; sequence VFGLVVLPLELKLRIFRLLDVHSVLALSAVCHDLLIASNDPLLWRCL. The tract at residues 381–522 is important for interaction with CDK6; sequence RDSTIRGPDT…RSADNRLPYL (142 aa). Arg431 and Arg451 each carry omega-N-methylarginine. Residues 459–522 are disordered; sequence DPVTSLIPRP…RSADNRLPYL (64 aa). Residues 481 to 484 carry the RFDP motif motif; sequence RFDP. At Arg518 the chain carries Asymmetric dimethylarginine.

In terms of assembly, part of the SCF (SKP1-CUL1-F-box) E3 ubiquitin-protein ligase complex SCF(FBXO7) formed of CUL1, SKP1, RBX1 and FBXO7. Interacts via its C-terminal proline-rich region with DLGAP5. Interacts with BIRC2. Interacts with CDK6 and promotes its interaction with D-type cyclin. Interacts (via the N-terminal Ubl domain) with PRKN. Interacts (via N-terminal region) with PINK1. Interacts with PSMF1.

It is found in the cytoplasm. Its subcellular location is the nucleus. The protein resides in the mitochondrion. It localises to the cytosol. Its pathway is protein modification; protein ubiquitination. Functionally, substrate recognition component of a SCF (SKP1-CUL1-F-box protein) E3 ubiquitin-protein ligase complex which mediates the ubiquitination and subsequent proteasomal degradation of target proteins and plays a role in several biological processes such as cell cycle, cell proliferation, or maintenance of chromosome stability. Recognizes and ubiquitinates BIRC2 and the cell cycle regulator DLGAP5. Plays a role downstream of PINK1 in the clearance of damaged mitochondria via selective autophagy (mitophagy) by targeting PRKN to dysfunctional depolarized mitochondria. Promotes MFN1 ubiquitination. Mediates the ubiquitination and proteasomal degradation of UXT isoform 2, thereby impairing the NF-kappa-B signaling pathway. Inhibits NF-kappa-B pathway also by promoting the ubiquitinatioin of TRAF2. Affects the assembly state and activity of the proteasome in the cells including neurons by ubiquitinating the proteasomal subunit PSMA2 via 'Lys-63'-linked polyubiquitin chains. Promotes 'Lys-48'-linked polyubiquitination SIRT7, leading to the hydrogen peroxide-induced cell death. The chain is F-box only protein 7 (Fbxo7) from Rattus norvegicus (Rat).